Reading from the N-terminus, the 38-residue chain is Photosystem II reaction center protein T (38 aa).

Residues 3–23 form a helical membrane-spanning segment; sequence ALVYTFLLVSTLGIIFFAIFF.

It belongs to the PsbT family. PSII is composed of 1 copy each of membrane proteins PsbA, PsbB, PsbC, PsbD, PsbE, PsbF, PsbH, PsbI, PsbJ, PsbK, PsbL, PsbM, PsbT, PsbY, PsbZ, Psb30/Ycf12, at least 3 peripheral proteins of the oxygen-evolving complex and a large number of cofactors. It forms dimeric complexes.

The protein localises to the plastid. Its subcellular location is the chloroplast thylakoid membrane. Functionally, found at the monomer-monomer interface of the photosystem II (PS II) dimer, plays a role in assembly and dimerization of PSII. PSII is a light-driven water plastoquinone oxidoreductase, using light energy to abstract electrons from H(2)O, generating a proton gradient subsequently used for ATP formation. This is Photosystem II reaction center protein T from Secale cereale (Rye).